The following is a 557-amino-acid chain: Tripeptidyl-peptidase 1 (557 aa).

A signal peptide spans 1-16 (MRVAVFVLSFIWLVNG). A propeptide spans 17–190 (ELLEADQDAV…WEGARQAILG (174 aa)) (removed in mature form). N-linked (GlcNAc...) asparagine glycosylation is present at Asn53. A disulfide bond links Cys107 and Cys118. The region spanning 194-557 (GVTPAVIRNR…YPVFLASLMD (364 aa)) is the Peptidase S53 domain. N-linked (GlcNAc...) asparagine glycosylation is found at Asn205 and Asn216. Active-site charge relay system residues include Glu266 and Asp270. N-linked (GlcNAc...) asparagine glycosylation is found at Asn280, Asn307, and Asn438. Cystine bridges form between Cys359–Cys521 and Cys517–Cys532. The Charge relay system role is filled by Ser470. Positions 512 and 513 each coordinate Ca(2+). Asp538 lines the Ca(2+) pocket.

It depends on Ca(2+) as a cofactor. In terms of processing, activated by autocatalytic proteolytical processing.

Its subcellular location is the lysosome. The catalysed reaction is Release of an N-terminal tripeptide from a polypeptide, but also has endopeptidase activity.. In terms of biological role, lysosomal serine protease with tripeptidyl-peptidase I activity. May act as a non-specific lysosomal peptidase which generates tripeptides from the breakdown products produced by lysosomal proteinases. Requires substrates with an unsubstituted N-terminus. This Danio rerio (Zebrafish) protein is Tripeptidyl-peptidase 1.